Reading from the N-terminus, the 22-residue chain is Cysteine-rich venom protein collettin-a (22 aa).

A compositionally biased stretch (basic and acidic residues) spans 1-15 (SNKKNYQKEIVDKHN). Residues 1–22 (SNKKNYQKEIVDKHNALRRSVK) are disordered.

The protein belongs to the CRISP family. In terms of processing, contains 8 disulfide bonds. Expressed by the venom gland.

The protein localises to the secreted. In Pseudechis colletti (Collett's snake), this protein is Cysteine-rich venom protein collettin-a.